The primary structure comprises 165 residues: GPI-anchored protein LORELEI (165 aa).

Positions methionine 1–serine 20 are cleaved as a signal peptide. Residues proline 82–aspartate 93 form a required for its function in pollen tube reception region. Residue asparagine 137 is glycosylated (N-linked (GlcNAc...) asparagine). The GPI-anchor amidated serine moiety is linked to residue serine 139. Residues threonine 140–threonine 165 constitute a propeptide, removed in mature form.

Interacts with FER. As to expression, expressed in leaves, buds, flowers and stems. Highest expression in the synergid cells of the female gametophyte.

It localises to the cell membrane. Functionally, female gametophyte-specific component of the signaling pathway required for fertilization. Required for reception of the pollen tube by the female gametophyte. Acts specifically at the synergid cell surface for pollen tube reception. Plays a role in double fertilization and early seed development. Component of the FER-regulated Rho GTPase signaling complex. Acts as a chaperone and coreceptor for FER. Required for localization of FER to the plasma membrane. In Arabidopsis thaliana (Mouse-ear cress), this protein is GPI-anchored protein LORELEI (LRE).